The chain runs to 627 residues: Pescadillo homolog (627 aa).

The 94-residue stretch at 321–414 (RLRTLFKGLK…QLLPTNKYFI (94 aa)) folds into the BRCT domain. 3 disordered regions span residues 450–469 (HAQS…ETVD), 488–566 (YKKY…MVKP), and 595–627 (TIEA…KLGK). Ser-453 and Ser-457 each carry phosphoserine. 2 stretches are compositionally biased toward acidic residues: residues 454-469 (DDDS…ETVD) and 497-521 (VNED…EELD). The segment covering 522-533 (EKTKRLQEEKQK) has biased composition (basic and acidic residues). A compositionally biased stretch (basic residues) spans 540 to 549 (KVHKVNKRQV). Composition is skewed to basic and acidic residues over residues 550–559 (HKAEVDEHRL) and 595–615 (TIEA…RKEA). Positions 582–625 (KEKEEWLLRKKRRTIEASEKEARKTAKREARKEAAAAAAKASKL) form a coiled coil. The span at 616–627 (AAAAAKASKLGK) shows a compositional bias: low complexity.

It belongs to the pescadillo family.

The protein resides in the nucleus. It localises to the nucleolus. Its subcellular location is the nucleoplasm. Required for maturation of ribosomal RNAs and formation of the large ribosomal subunit. The sequence is that of Pescadillo homolog from Drosophila simulans (Fruit fly).